Consider the following 101-residue polypeptide: MEKSALIFIGILLFSTCTSIMARTGYVSCKTNSDCVKLKCPTPFGGPKCISGSCECPFKELMTLPNDTNYGVAACIDYCKAKGEIVYACILNHCYSYKPPM.

A signal peptide spans 1-22 (MEKSALIFIGILLFSTCTSIMA). 3 disulfide bridges follow: Cys29-Cys49, Cys35-Cys54, and Cys40-Cys56.

The protein belongs to the DEFL family.

It is found in the secreted. The sequence is that of Putative defensin-like protein 307 from Arabidopsis thaliana (Mouse-ear cress).